The following is a 234-amino-acid chain: MGQKVHPNGIRLGIVKPWNSTWFANTQDFADNLDGDFKVRKFLNKELANASVSRIIIERPAKSIRVTIHTARPGIVIGKKGEDVEKLRNAVSQIAGVPAQINIAEVKKPELDAKLVADSIASQLERRVMFRRAMKRAVQNAMRLGAKGIKVEVSGRLGGAEIARSEWYREGRVPLHTLRADIDYNTAEAHTTYGVIGVKVWIFKGEILGGMAAVIESEQQPAAQPKKQARKGRK.

Residues 39 to 107 (VRKFLNKELA…PAQINIAEVK (69 aa)) form the KH type-2 domain.

Belongs to the universal ribosomal protein uS3 family. In terms of assembly, part of the 30S ribosomal subunit. Forms a tight complex with proteins S10 and S14.

Functionally, binds the lower part of the 30S subunit head. Binds mRNA in the 70S ribosome, positioning it for translation. The polypeptide is Small ribosomal subunit protein uS3 (Haemophilus ducreyi (strain 35000HP / ATCC 700724)).